Reading from the N-terminus, the 554-residue chain is Sesquiterpene synthase 14a (554 aa).

Aspartate 305, aspartate 309, aspartate 449, and glutamate 457 together coordinate Mg(2+). The DDXXD motif signature appears at 305 to 309 (DDLYD).

This sequence belongs to the terpene synthase family. Tpsa subfamily. Mg(2+) is required as a cofactor. Requires Mn(2+) as cofactor. As to expression, mostly expressed in stem trichomes.

It carries out the reaction (2E,6E)-farnesyl diphosphate = beta-bisabolene + diphosphate. It catalyses the reaction (2E,6E)-farnesyl diphosphate = (Z)-alpha-bisabolene + diphosphate. The enzyme catalyses (2E,6E)-farnesyl diphosphate = beta-acoradiene + diphosphate. The catalysed reaction is (2E,6E)-farnesyl diphosphate = (E)-gamma-bisabolene + diphosphate. It carries out the reaction (2E,6E)-farnesyl diphosphate = (E)-beta-farnesene + diphosphate. It catalyses the reaction (2E,6E)-farnesyl diphosphate = (Z)-beta-farnesene + diphosphate. The enzyme catalyses (2E)-geranyl diphosphate = limonene + diphosphate. The catalysed reaction is (2E)-geranyl diphosphate = beta-myrcene + diphosphate. It participates in secondary metabolite biosynthesis; terpenoid biosynthesis. Its function is as follows. Sesquiterpene synthase involved in the biosynthesis of volatile compounds. Mediates the conversion of (2E,6E)-farnesyl diphosphate ((EE)-FPP) into beta-bisabolene, beta-farnesene, (E)-gamma-bisabolene, beta-acoradiene, selinene and (Z)-alpha-bisabolene. Low or no activity with (2Z,6Z)-farnesyl diphosphate ((ZZ)-FPP). Can act with a low efficiency as a monoterpene synthase with geranyl diphosphate (GPP) as substrate, thus producing beta-myrcene and limonene. In Solanum habrochaites (Wild tomato), this protein is Sesquiterpene synthase 14a.